A 98-amino-acid chain; its full sequence is PE family immunomodulator PE35 (98 aa).

The PE domain maps to 1 to 90 (MEKMSHDPIA…DVARTYSQID (90 aa)).

Belongs to the mycobacterial PE family. As to quaternary structure, interacts with PPE68. PE35/PPE68 complex interacts with human TLR2.

It is found in the secreted. It localises to the cell surface. Functionally, plays a major role in RD1-associated pathogenesis, and may contribute to the establishment and maintenance of M.tuberculosis infection. Together with PPE68, stimulates the secretion of IL-10 and MCP-1 from human macrophages, via the interaction with human Toll-like receptor 2 (TLR2). This chain is PE family immunomodulator PE35 (PE35), found in Mycobacterium tuberculosis (strain CDC 1551 / Oshkosh).